A 116-amino-acid polypeptide reads, in one-letter code: MADLIPLAQARCVPRKGSDHKLGEARLAELLPQIPGWELSEGGQALSRTFRFKDYYATMAFVNALAWIAHREDHHPDLGVHYDRAVVRFSTHDVGGLSENDFICAAKTSALTEQLP.

It belongs to the pterin-4-alpha-carbinolamine dehydratase family.

The enzyme catalyses (4aS,6R)-4a-hydroxy-L-erythro-5,6,7,8-tetrahydrobiopterin = (6R)-L-erythro-6,7-dihydrobiopterin + H2O. The polypeptide is Putative pterin-4-alpha-carbinolamine dehydratase (Stenotrophomonas maltophilia (strain K279a)).